The following is a 79-amino-acid chain: Acyl carrier protein (79 aa).

The 76-residue stretch at 2-77 (SDIEARVKKI…NAIDYANTHH (76 aa)) folds into the Carrier domain. Position 37 is an O-(pantetheine 4'-phosphoryl)serine (S37).

It belongs to the acyl carrier protein (ACP) family. 4'-phosphopantetheine is transferred from CoA to a specific serine of apo-ACP by AcpS. This modification is essential for activity because fatty acids are bound in thioester linkage to the sulfhydryl of the prosthetic group.

Its subcellular location is the cytoplasm. Its pathway is lipid metabolism; fatty acid biosynthesis. Its function is as follows. Carrier of the growing fatty acid chain in fatty acid biosynthesis. The protein is Acyl carrier protein of Polaromonas naphthalenivorans (strain CJ2).